We begin with the raw amino-acid sequence, 287 residues long: Spermidine/putrescine transport system permease protein PotB (287 aa).

Over 1–10 (MKNTSKFQNV) the chain is Cytoplasmic. Residues 11-31 (VIVTIVGWLVLFVFLPNLMII) form a helical membrane-spanning segment. The Periplasmic segment spans residues 32–70 (GTSFLTRDDASFVKMVFTLDNYARLLDPLYFEVLLHSLN). The region spanning 65 to 271 (LLHSLNMALI…IVMGLMLLIY (207 aa)) is the ABC transmembrane type-1 domain. A helical membrane pass occupies residues 71 to 91 (MALIATLSCLVLGYPFAWFLA). Over 92–99 (KLPEKIRP) the chain is Cytoplasmic. A helical transmembrane segment spans residues 100 to 120 (LLLFLLIVPFWTNSLIRIYGL). The Periplasmic segment spans residues 121 to 145 (KIFLSTKGYLNEFLLWLGVIDTPIR). A helical membrane pass occupies residues 146 to 166 (IMFTPSAVIIGLVYILLPFMV). Residues 167-197 (MPLYSSIEKLDKPLLEAARDLGASKMQTFIR) lie on the Cytoplasmic side of the membrane. A helical transmembrane segment spans residues 198-218 (IIIPLTMPGIVAGCLLVMLPA). Over 219–251 (MGLFYVSDLMGGAKNLLIGNVIKVQFLNIRDWP) the chain is Periplasmic. The helical transmembrane segment at 252-272 (FGAATSITLTIVMGLMLLIYW) threads the bilayer. The Cytoplasmic portion of the chain corresponds to 273–287 (RASRLLNKKVSDISD).

It belongs to the binding-protein-dependent transport system permease family. CysTW subfamily.

It localises to the cell inner membrane. In terms of biological role, required for the activity of the bacterial periplasmic transport system of putrescine and spermidine. This chain is Spermidine/putrescine transport system permease protein PotB (potB), found in Salmonella typhi.